The primary structure comprises 312 residues: Ornithine carbamoyltransferase (312 aa).

Carbamoyl phosphate-binding positions include serine 59–threonine 62, glutamine 86, arginine 110, and histidine 137–glutamine 140. Residues asparagine 167, aspartate 231, and serine 235–methionine 236 each bind L-ornithine. Carbamoyl phosphate contacts are provided by cysteine 271 and arginine 299.

The protein belongs to the aspartate/ornithine carbamoyltransferase superfamily. OTCase family.

Its subcellular location is the cytoplasm. It carries out the reaction carbamoyl phosphate + L-ornithine = L-citrulline + phosphate + H(+). It functions in the pathway amino-acid biosynthesis; L-arginine biosynthesis; L-arginine from L-ornithine and carbamoyl phosphate: step 1/3. Functionally, reversibly catalyzes the transfer of the carbamoyl group from carbamoyl phosphate (CP) to the N(epsilon) atom of ornithine (ORN) to produce L-citrulline. The chain is Ornithine carbamoyltransferase from Methanopyrus kandleri (strain AV19 / DSM 6324 / JCM 9639 / NBRC 100938).